We begin with the raw amino-acid sequence, 476 residues long: Cytochrome c oxidase subunit 1 (476 aa).

The helical transmembrane segment at 19-39 threads the bilayer; that stretch reads LYYLWFSFLFGTYGFLLSVIL. Glu-42 contributes to the Ca(2+) binding site. The next 8 helical transmembrane spans lie at 61–81, 105–125, 144–164, 194–214, 240–260, 278–298, 309–329, and 345–365; these read MIFT…GLFG, ISLL…AAEF, LSPV…IASI, IIIT…GVLM, LFWF…FGVI, MILA…HHMY, FFTS…FNWL, and LLCL…VILG. His-66 serves as a coordination point for Fe(II)-heme a. A Cu cation-binding site is contributed by His-246. A cross-link (1'-histidyl-3'-tyrosine (His-Tyr)) is located at residues 246-250; that stretch reads HPEVY. Tyr-250 provides a ligand contact to O2. His-295 and His-296 together coordinate Cu cation. Mg(2+)-binding residues include His-374 and Asp-375. 2 helical membrane-spanning segments follow: residues 379–399 and 415–435; these read VIAH…FTCV and TLIV…FLPM. His-382 lines the heme a3 pocket. His-384 is a Fe(II)-heme a binding site. Ca(2+) is bound at residue Pro-448. Residues 455-475 traverse the membrane as a helical segment; sequence NGWNMICSIGSTMTLFGLLIF.

It belongs to the heme-copper respiratory oxidase family. In terms of assembly, component of the cytochrome c oxidase (complex IV, CIV), a multisubunit enzyme composed of a catalytic core of 3 subunits and several supernumerary subunits. The complex exists as a monomer or a dimer and forms supercomplexes (SCs) in the inner mitochondrial membrane with ubiquinol-cytochrome c oxidoreductase (cytochrome b-c1 complex, complex III, CIII). Heme is required as a cofactor. The cofactor is Cu cation.

It is found in the mitochondrion inner membrane. The catalysed reaction is 4 Fe(II)-[cytochrome c] + O2 + 8 H(+)(in) = 4 Fe(III)-[cytochrome c] + 2 H2O + 4 H(+)(out). It functions in the pathway energy metabolism; oxidative phosphorylation. Functionally, component of the cytochrome c oxidase, the last enzyme in the mitochondrial electron transport chain which drives oxidative phosphorylation. The respiratory chain contains 3 multisubunit complexes succinate dehydrogenase (complex II, CII), ubiquinol-cytochrome c oxidoreductase (cytochrome b-c1 complex, complex III, CIII) and cytochrome c oxidase (complex IV, CIV), that cooperate to transfer electrons derived from NADH and succinate to molecular oxygen, creating an electrochemical gradient over the inner membrane that drives transmembrane transport and the ATP synthase. Cytochrome c oxidase is the component of the respiratory chain that catalyzes the reduction of oxygen to water. Electrons originating from reduced cytochrome c in the intermembrane space (IMS) are transferred via the dinuclear copper A center (CU(A)) of subunit 2 and heme A of subunit 1 to the active site in subunit 1, a binuclear center (BNC) formed by heme A3 and copper B (CU(B)). The BNC reduces molecular oxygen to 2 water molecules using 4 electrons from cytochrome c in the IMS and 4 protons from the mitochondrial matrix. The polypeptide is Cytochrome c oxidase subunit 1 (COI) (Plasmodium berghei).